Here is a 371-residue protein sequence, read N- to C-terminus: Anhydro-N-acetylmuramic acid kinase (371 aa).

9–16 serves as a coordination point for ATP; the sequence is GTSLDAVD.

It belongs to the anhydro-N-acetylmuramic acid kinase family.

The enzyme catalyses 1,6-anhydro-N-acetyl-beta-muramate + ATP + H2O = N-acetyl-D-muramate 6-phosphate + ADP + H(+). The protein operates within amino-sugar metabolism; 1,6-anhydro-N-acetylmuramate degradation. It participates in cell wall biogenesis; peptidoglycan recycling. In terms of biological role, catalyzes the specific phosphorylation of 1,6-anhydro-N-acetylmuramic acid (anhMurNAc) with the simultaneous cleavage of the 1,6-anhydro ring, generating MurNAc-6-P. Is required for the utilization of anhMurNAc either imported from the medium or derived from its own cell wall murein, and thus plays a role in cell wall recycling. This is Anhydro-N-acetylmuramic acid kinase from Caulobacter vibrioides (strain ATCC 19089 / CIP 103742 / CB 15) (Caulobacter crescentus).